The chain runs to 62 residues: Large ribosomal subunit protein uL29 (62 aa).

Belongs to the universal ribosomal protein uL29 family.

The chain is Large ribosomal subunit protein uL29 from Acholeplasma laidlawii (strain PG-8A).